We begin with the raw amino-acid sequence, 555 residues long: Coiled-coil domain-containing protein 102A (555 aa).

Disordered stretches follow at residues 1-68 (MSHG…ADGD), 136-202 (LAGA…GSQE), and 214-254 (PEEP…EEDA). A phosphoserine mark is found at serine 12, serine 26, and serine 28. Over residues 37-61 (SLPPTPPSGTPSPGPPPALPLPPTP) the composition is skewed to pro residues. Residues 72-161 (REELRLRELE…ARGRELARLR (90 aa)) are a coiled coil. 2 stretches are compositionally biased toward basic and acidic residues: residues 136-159 (LAGA…ELAR) and 166-183 (GVDR…REQE). Residues 224 to 236 (RSAGAGAPRGSSG) are compositionally biased toward low complexity. 2 coiled-coil regions span residues 268 to 401 (QKVL…RRQT) and 432 to 522 (KLKK…QNAP). Positions 478–555 (ELDEAHNQAR…EDEDLQIQVA (78 aa)) are disordered. Residues 536–555 (EAGDGASDLDEDEDLQIQVA) show a composition bias toward acidic residues. At serine 542 the chain carries Phosphoserine.

This is Coiled-coil domain-containing protein 102A (CCDC102A) from Bos taurus (Bovine).